A 202-amino-acid polypeptide reads, in one-letter code: Dephospho-CoA kinase (202 aa).

Positions 6–202 (KVSITGDLSS…EYFYALKGAL (197 aa)) constitute a DPCK domain. 14–19 (SSGKTE) is an ATP binding site.

This sequence belongs to the CoaE family.

The protein resides in the cytoplasm. The catalysed reaction is 3'-dephospho-CoA + ATP = ADP + CoA + H(+). It functions in the pathway cofactor biosynthesis; coenzyme A biosynthesis; CoA from (R)-pantothenate: step 5/5. Its function is as follows. Catalyzes the phosphorylation of the 3'-hydroxyl group of dephosphocoenzyme A to form coenzyme A. In Chlamydia felis (strain Fe/C-56) (Chlamydophila felis), this protein is Dephospho-CoA kinase.